The chain runs to 56 residues: Small ribosomal subunit protein uS14 (56 aa).

Residues cysteine 21, cysteine 24, cysteine 39, and cysteine 42 each contribute to the Zn(2+) site.

This sequence belongs to the universal ribosomal protein uS14 family. In terms of assembly, component of the 40S small ribosomal subunit. Zn(2+) is required as a cofactor.

The protein localises to the cytoplasm. The protein resides in the cytosol. It is found in the rough endoplasmic reticulum. This is Small ribosomal subunit protein uS14 (RpS29) from Lonomia obliqua (Moth).